The sequence spans 293 residues: Ribokinase (293 aa).

Residues 11–13, 39–43, and E139 each bind substrate; these read SMD and GKGAN. ATP is bound by residues N183 and 210–215; that span reads TEGKQG. K(+)-binding residues include D236 and T238. Residues 241–242 and N266 contribute to the ATP site; that span reads GD. D242 lines the substrate pocket. The active-site Proton acceptor is the D242. The K(+) site is built by S272, S275, and G277.

The protein belongs to the carbohydrate kinase PfkB family. Ribokinase subfamily. In terms of assembly, homodimer. Mg(2+) serves as cofactor.

The protein resides in the cytoplasm. It catalyses the reaction D-ribose + ATP = D-ribose 5-phosphate + ADP + H(+). It functions in the pathway carbohydrate metabolism; D-ribose degradation; D-ribose 5-phosphate from beta-D-ribopyranose: step 2/2. Activated by a monovalent cation that binds near, but not in, the active site. The most likely occupant of the site in vivo is potassium. Ion binding induces a conformational change that may alter substrate affinity. In terms of biological role, catalyzes the phosphorylation of ribose at O-5 in a reaction requiring ATP and magnesium. The resulting D-ribose-5-phosphate can then be used either for sythesis of nucleotides, histidine, and tryptophan, or as a component of the pentose phosphate pathway. This chain is Ribokinase, found in Bacillus subtilis (strain 168).